Reading from the N-terminus, the 487-residue chain is Acetyl-coenzyme A carboxylase carboxyl transferase subunit beta, chloroplastic (487 aa).

The CoA carboxyltransferase N-terminal domain maps to 223–487 (LWIQCDNCYG…FCPLNKTEIK (265 aa)). Positions 227, 230, 243, and 246 each coordinate Zn(2+). The C4-type zinc-finger motif lies at 227–246 (CDNCYGLMYKKVKMNVCEQC).

It belongs to the AccD/PCCB family. As to quaternary structure, acetyl-CoA carboxylase is a heterohexamer composed of biotin carboxyl carrier protein, biotin carboxylase and 2 subunits each of ACCase subunit alpha and ACCase plastid-coded subunit beta (accD). Zn(2+) is required as a cofactor.

Its subcellular location is the plastid. It localises to the chloroplast stroma. It catalyses the reaction N(6)-carboxybiotinyl-L-lysyl-[protein] + acetyl-CoA = N(6)-biotinyl-L-lysyl-[protein] + malonyl-CoA. The protein operates within lipid metabolism; malonyl-CoA biosynthesis; malonyl-CoA from acetyl-CoA: step 1/1. In terms of biological role, component of the acetyl coenzyme A carboxylase (ACC) complex. Biotin carboxylase (BC) catalyzes the carboxylation of biotin on its carrier protein (BCCP) and then the CO(2) group is transferred by the transcarboxylase to acetyl-CoA to form malonyl-CoA. The protein is Acetyl-coenzyme A carboxylase carboxyl transferase subunit beta, chloroplastic of Nasturtium officinale (Watercress).